The primary structure comprises 264 residues: S-adenosylmethionine decarboxylase proenzyme (264 aa).

The active-site Schiff-base intermediate with substrate; via pyruvic acid is S113. S113 is modified (pyruvic acid (Ser); by autocatalysis). The active-site Proton acceptor; for processing activity is the H118. Catalysis depends on C141, which acts as the Proton donor; for catalytic activity.

It belongs to the prokaryotic AdoMetDC family. Type 2 subfamily. In terms of assembly, heterooctamer of four alpha and four beta chains arranged as a tetramer of alpha/beta heterodimers. Pyruvate is required as a cofactor. In terms of processing, is synthesized initially as an inactive proenzyme. Formation of the active enzyme involves a self-maturation process in which the active site pyruvoyl group is generated from an internal serine residue via an autocatalytic post-translational modification. Two non-identical subunits are generated from the proenzyme in this reaction, and the pyruvate is formed at the N-terminus of the alpha chain, which is derived from the carboxyl end of the proenzyme. The post-translation cleavage follows an unusual pathway, termed non-hydrolytic serinolysis, in which the side chain hydroxyl group of the serine supplies its oxygen atom to form the C-terminus of the beta chain, while the remainder of the serine residue undergoes an oxidative deamination to produce ammonia and the pyruvoyl group blocking the N-terminus of the alpha chain.

It catalyses the reaction S-adenosyl-L-methionine + H(+) = S-adenosyl 3-(methylsulfanyl)propylamine + CO2. It functions in the pathway amine and polyamine biosynthesis; S-adenosylmethioninamine biosynthesis; S-adenosylmethioninamine from S-adenosyl-L-methionine: step 1/1. Catalyzes the decarboxylation of S-adenosylmethionine to S-adenosylmethioninamine (dcAdoMet), the propylamine donor required for the synthesis of the polyamines spermine and spermidine from the diamine putrescine. The sequence is that of S-adenosylmethionine decarboxylase proenzyme from Xylella fastidiosa (strain Temecula1 / ATCC 700964).